The chain runs to 181 residues: ADP-ribosylation factor 2 (181 aa).

Residue glycine 2 is the site of N-myristoyl glycine attachment. GTP-binding positions include 24 to 31 (GLDAAGKT), 67 to 71 (DVGGQ), and 126 to 129 (NKQD).

This sequence belongs to the small GTPase superfamily. Arf family.

The protein resides in the golgi apparatus. GTP-binding protein that functions as an allosteric activator of the cholera toxin catalytic subunit, an ADP-ribosyltransferase. Involved in protein trafficking; may modulate vesicle budding and uncoating within the Golgi apparatus. The sequence is that of ADP-ribosylation factor 2 (ARF2) from Bos taurus (Bovine).